Here is a 695-residue protein sequence, read N- to C-terminus: Threonine--tRNA ligase 1, cytoplasmic (695 aa).

A disordered region spans residues 1–21; sequence MSEEKASSPSGKMDGEKPLNP. The region spanning 51–115 is the TGS domain; sequence DSKPIKVTLP…ETDCTLELLK (65 aa). Lys-215 bears the N6-acetyllysine mark. Thr-218 is subject to Phosphothreonine. Tyr-270 carries the phosphotyrosine modification. Thr-425 is modified (phosphothreonine).

It belongs to the class-II aminoacyl-tRNA synthetase family. In terms of assembly, homodimer. Post-translationally, ISGylated.

It is found in the cytoplasm. The enzyme catalyses tRNA(Thr) + L-threonine + ATP = L-threonyl-tRNA(Thr) + AMP + diphosphate + H(+). Functionally, catalyzes the attachment of threonine to tRNA(Thr) in a two-step reaction: threonine is first activated by ATP to form Thr-AMP and then transferred to the acceptor end of tRNA(Thr). Also edits incorrectly charged tRNA(Thr) via its editing domain, at the post-transfer stage. This chain is Threonine--tRNA ligase 1, cytoplasmic (Tars1), found in Rattus norvegicus (Rat).